A 479-amino-acid chain; its full sequence is Cardiolipin synthase A (479 aa).

The next 2 membrane-spanning stretches (helical) occupy residues 8 to 28 (FFGY…LHAV) and 38 to 58 (IAWA…YLVF). 2 consecutive PLD phosphodiesterase domains span residues 218–245 (VNFR…GDEY) and 392–419 (QPGF…DNRS). Catalysis depends on residues H223, K225, D230, H397, K399, and D404.

The protein belongs to the phospholipase D family. Cardiolipin synthase subfamily. ClsA sub-subfamily.

The protein localises to the cell inner membrane. It catalyses the reaction 2 a 1,2-diacyl-sn-glycero-3-phospho-(1'-sn-glycerol) = a cardiolipin + glycerol. In terms of biological role, catalyzes the reversible phosphatidyl group transfer from one phosphatidylglycerol molecule to another to form cardiolipin (CL) (diphosphatidylglycerol) and glycerol. The polypeptide is Cardiolipin synthase A (Pseudomonas putida (strain GB-1)).